Here is a 136-residue protein sequence, read N- to C-terminus: ATP synthase F(0) complex subunit C1, mitochondrial (136 aa).

A mitochondrion-targeting transit peptide spans 1–61 (MQTAGALFIS…REFQTSVVSR (61 aa)). Residues 77-97 (VGVAGSGAGIGTVFGSLIIGY) form a helical membrane-spanning segment. Lys-104 is modified (N6,N6,N6-trimethyllysine). A helical membrane pass occupies residues 112–132 (ILGFALSEAMGLFCLMVAFLI).

This sequence belongs to the ATPase C chain family. In terms of assembly, homooctamer; the c-ring consists of eight c subunits forming a circle, and each subunit adopts a hairpin shape. Component of the ATP synthase complex composed at least of ATP5F1A/subunit alpha, ATP5F1B/subunit beta, ATP5MC1/subunit c (homooctomer), MT-ATP6/subunit a, MT-ATP8/subunit 8, ATP5ME/subunit e, ATP5MF/subunit f, ATP5MG/subunit g, ATP5MK/subunit k, ATP5MJ/subunit j, ATP5F1C/subunit gamma, ATP5F1D/subunit delta, ATP5F1E/subunit epsilon, ATP5PF/subunit F6, ATP5PB/subunit b, ATP5PD/subunit d, ATP5PO/subunit OSCP. ATP synthase complex consists of a soluble F(1) head domain (subunits alpha(3) and beta(3)) - the catalytic core - and a membrane F(0) domain - the membrane proton channel (subunits c, a, 8, e, f, g, k and j). These two domains are linked by a central stalk (subunits gamma, delta, and epsilon) rotating inside the F1 region and a stationary peripheral stalk (subunits F6, b, d, and OSCP). Interacts with TMEM70 (homooligomer form); this interaction facilitates the oligomer formation of subunit c/ATP5MC1 (c-ring) and the c-ring membrane insertion and also protects ATP5MC1 against intramitochondrial proteolysis. Post-translationally, trimethylated by ATPSCKMT at Lys-104. Methylation is required for proper incorporation of the C subunit into the ATP synthase complex and mitochondrial respiration.

The protein localises to the mitochondrion membrane. It catalyses the reaction H(+)(in) = H(+)(out). Its function is as follows. Subunit c, of the mitochondrial membrane ATP synthase complex (F(1)F(0) ATP synthase or Complex V) that produces ATP from ADP in the presence of a proton gradient across the membrane which is generated by electron transport complexes of the respiratory chain. ATP synthase complex consist of a soluble F(1) head domain - the catalytic core - and a membrane F(1) domain - the membrane proton channel. These two domains are linked by a central stalk rotating inside the F(1) region and a stationary peripheral stalk. During catalysis, ATP synthesis in the catalytic domain of F(1) is coupled via a rotary mechanism of the central stalk subunits to proton translocation. With the subunit a (MT-ATP6), forms the proton-conducting channel in the F(0) domain, that contains two crucial half-channels (inlet and outlet) that facilitate proton movement from the mitochondrial intermembrane space (IMS) into the matrix. Protons are taken up via the inlet half-channel and released through the outlet half-channel, following a Grotthuss mechanism. The protein is ATP synthase F(0) complex subunit C1, mitochondrial of Homo sapiens (Human).